We begin with the raw amino-acid sequence, 287 residues long: Histone H1 (287 aa).

Residues 1 to 11 show a composition bias toward low complexity; the sequence is MATEEPVIVNE. Disordered regions lie at residues 1 to 58 and 120 to 287; these read MATE…THPP and YKLP…RGRK. The span at 33-51 shows a compositional bias: basic residues; that stretch reads GKAKKETKAKKPAAPRKRS. One can recognise an H15 domain in the interval 55-124; the sequence is THPPYFEMIK…KVKNSYKLPS (70 aa). A compositionally biased stretch (basic residues) spans 135–202; that stretch reads AKKKPAAAKS…KAKPVAKAKP (68 aa). A compositionally biased stretch (low complexity) spans 203–248; sequence KAAAAAKPKAAVKPKAAPAKTKAAVKPNLKAKTTTAKVAKTATRTT. Residues 276 to 287 are compositionally biased toward basic residues; that stretch reads PAKKATPKRGRK.

This sequence belongs to the histone H1/H5 family.

Its subcellular location is the nucleus. The protein localises to the chromosome. In terms of biological role, histones H1 are necessary for the condensation of nucleosome chains into higher-order structures. The protein is Histone H1 of Solanum lycopersicum (Tomato).